The primary structure comprises 167 residues: Methylated-DNA--protein-cysteine methyltransferase (167 aa).

Cysteine 128 acts as the Nucleophile; methyl group acceptor in catalysis.

Belongs to the MGMT family.

It is found in the cytoplasm. It catalyses the reaction a 6-O-methyl-2'-deoxyguanosine in DNA + L-cysteinyl-[protein] = S-methyl-L-cysteinyl-[protein] + a 2'-deoxyguanosine in DNA. It carries out the reaction a 4-O-methyl-thymidine in DNA + L-cysteinyl-[protein] = a thymidine in DNA + S-methyl-L-cysteinyl-[protein]. Its function is as follows. Involved in the cellular defense against the biological effects of O6-methylguanine (O6-MeG) and O4-methylthymine (O4-MeT) in DNA. Repairs the methylated nucleobase in DNA by stoichiometrically transferring the methyl group to a cysteine residue in the enzyme. This is a suicide reaction: the enzyme is irreversibly inactivated. The polypeptide is Methylated-DNA--protein-cysteine methyltransferase (Methanocaldococcus jannaschii (strain ATCC 43067 / DSM 2661 / JAL-1 / JCM 10045 / NBRC 100440) (Methanococcus jannaschii)).